A 433-amino-acid polypeptide reads, in one-letter code: Enolase (433 aa).

Residue Gln-167 participates in (2R)-2-phosphoglycerate binding. Glu-209 acts as the Proton donor in catalysis. Mg(2+) contacts are provided by Asp-246, Glu-291, and Asp-318. Residues Lys-343, Arg-372, Ser-373, and Lys-394 each coordinate (2R)-2-phosphoglycerate. Catalysis depends on Lys-343, which acts as the Proton acceptor.

This sequence belongs to the enolase family. As to quaternary structure, component of the RNA degradosome, a multiprotein complex involved in RNA processing and mRNA degradation. Mg(2+) is required as a cofactor.

Its subcellular location is the cytoplasm. It localises to the secreted. The protein resides in the cell surface. The catalysed reaction is (2R)-2-phosphoglycerate = phosphoenolpyruvate + H2O. The protein operates within carbohydrate degradation; glycolysis; pyruvate from D-glyceraldehyde 3-phosphate: step 4/5. Functionally, catalyzes the reversible conversion of 2-phosphoglycerate (2-PG) into phosphoenolpyruvate (PEP). It is essential for the degradation of carbohydrates via glycolysis. The sequence is that of Enolase from Pasteurella multocida (strain Pm70).